A 512-amino-acid chain; its full sequence is Probable cobyric acid synthase (512 aa).

Residues 275–460 (SVTVAVPHLP…LHGLFGNDAA (186 aa)) enclose the GATase cobBQ-type domain. The active-site Nucleophile is the C353. Residue H452 is part of the active site.

The protein belongs to the CobB/CobQ family. CobQ subfamily.

Its pathway is cofactor biosynthesis; adenosylcobalamin biosynthesis. In terms of biological role, catalyzes amidations at positions B, D, E, and G on adenosylcobyrinic A,C-diamide. NH(2) groups are provided by glutamine, and one molecule of ATP is hydrogenolyzed for each amidation. This chain is Probable cobyric acid synthase, found in Halobacterium salinarum (strain ATCC 29341 / DSM 671 / R1).